Here is a 62-residue protein sequence, read N- to C-terminus: uncharacterized protein (62 aa).

Residues 17–62 (YNNYNNNNNNNNNNNNNNNNNNNNNNNNNNNNNNNNNNNNNNKNNN) are disordered.

This is an uncharacterized protein from Dictyostelium discoideum (Social amoeba).